The following is a 203-amino-acid chain: CCG-binding protein 1 (203 aa).

The segment at 156-178 (IPDGLPKSEQELEEEEKSKMPDS) is disordered. The segment covering 161-175 (PKSEQELEEEEKSKM) has biased composition (basic and acidic residues).

Homotetramer. Interacts with MEE12/CCG, MED7A, MED7B, MED9, AGL49, AGL53, AGL75, AGL80, AGL81, AGL82, AGL103 and NRPB1 (via CTD). As to expression, expressed in roots, leaves, stems and flowers. Expressed in the central cell of mature ovules.

It localises to the nucleus. It is found in the cytoplasm. Functionally, required for the development of the one-cell zygote and endosperm in embryos. Required for micropylar pollen tube guidance, but has no effect on ovule development and gametophytic cell fate specification. May connect transcription factors and the Pol II machinery to regulate pollen tube attraction, via its interactions with AGAMOUS-like (AGL) transcription factors, MEE14/CCG and the Mediator complex. This chain is CCG-binding protein 1, found in Arabidopsis thaliana (Mouse-ear cress).